A 318-amino-acid polypeptide reads, in one-letter code: Receptor homology region, transmembrane domain- and RING domain-containing protein 5 (318 aa).

A signal peptide spans 1–20 (MNYSWITIMSLLVICKLASA). At 22 to 163 (VVLIGKNTIL…IPGFGISSWS (142 aa)) the chain is on the lumenal side. Cys62 and Cys87 are joined by a disulfide. The 74-residue stretch at 70-143 (EKRSKYRSSY…RASGEVLKGY (74 aa)) folds into the PA domain. Asn121 carries N-linked (GlcNAc...) asparagine glycosylation. The chain crosses the membrane as a helical span at residues 164–184 (IMGITFISLLAMSAILATCFV). At 185–318 (VRRHQIRQSV…DLPIVVRVYL (134 aa)) the chain is on the cytoplasmic side. The RING-type; atypical zinc-finger motif lies at 233–275 (CAICIDDYCVGEKLRILPCKHKYHAVCIDSWLGRCRSFCPVCK).

Its subcellular location is the prevacuolar compartment membrane. The protein localises to the protein storage vacuole membrane. In terms of biological role, involved in the trafficking of vacuolar proteins. May function as a sorting receptor for protein trafficking to the protein storage vacuole (PSV). In Arabidopsis thaliana (Mouse-ear cress), this protein is Receptor homology region, transmembrane domain- and RING domain-containing protein 5 (RMR5).